A 316-amino-acid chain; its full sequence is Acetyl-coenzyme A carboxylase carboxyl transferase subunit alpha (316 aa).

The region spanning 39-293 (RLQDKSESLT…REQLNSQLHM (255 aa)) is the CoA carboxyltransferase C-terminal domain.

This sequence belongs to the AccA family. As to quaternary structure, acetyl-CoA carboxylase is a heterohexamer composed of biotin carboxyl carrier protein (AccB), biotin carboxylase (AccC) and two subunits each of ACCase subunit alpha (AccA) and ACCase subunit beta (AccD).

The protein resides in the cytoplasm. The enzyme catalyses N(6)-carboxybiotinyl-L-lysyl-[protein] + acetyl-CoA = N(6)-biotinyl-L-lysyl-[protein] + malonyl-CoA. It functions in the pathway lipid metabolism; malonyl-CoA biosynthesis; malonyl-CoA from acetyl-CoA: step 1/1. In terms of biological role, component of the acetyl coenzyme A carboxylase (ACC) complex. First, biotin carboxylase catalyzes the carboxylation of biotin on its carrier protein (BCCP) and then the CO(2) group is transferred by the carboxyltransferase to acetyl-CoA to form malonyl-CoA. The chain is Acetyl-coenzyme A carboxylase carboxyl transferase subunit alpha from Stutzerimonas stutzeri (strain A1501) (Pseudomonas stutzeri).